The primary structure comprises 446 residues: Questin oxidase (446 aa).

The protein belongs to the questin oxidase family.

It carries out the reaction questin + NADPH + O2 = demethylsulochrin + NADP(+). The protein operates within secondary metabolite biosynthesis. Questin oxidase; part of the gene cluster that mediates the biosynthesis of geodin, an intermediate in the biosynthesis of other natural products. The pathway begins with the synthesis of atrochrysone thioester by the polyketide synthase (PKS) gedC. The atrochrysone carboxyl ACP thioesterase gedB then breaks the thioester bond and releases the atrochrysone carboxylic acid from gedC. The atrochrysone carboxylic acid is then converted to atrochrysone which is further transformed into emodinanthrone. The next step is performed by the emodinanthrone oxygenase gedH that catalyzes the oxidation of emodinanthrone to emodin. Emodin O-methyltransferase encoded probably by gedA then catalyzes methylation of the 8-hydroxy group of emodin to form questin. Ring cleavage of questin by questin oxidase gedK leads to desmethylsulochrin via several intermediates including questin epoxide. Another methylation step probably catalyzed by methyltransferase gedG leads to the formation of sulochrin which is further converted to dihydrogeodin by the sulochrin halogenase gedL. Finally, the dihydrogeodin oxidase gedJ catalyzes the stereospecific phenol oxidative coupling reaction converting dihydrogeodin to geodin. This is Questin oxidase from Aspergillus terreus (strain NIH 2624 / FGSC A1156).